The chain runs to 125 residues: Cu-Zn superoxide dismutase-like protein OPG175 (125 aa).

A disulfide bond links cysteine 52 and cysteine 102.

The protein belongs to the Cu-Zn superoxide dismutase family.

It is found in the virion. The protein localises to the host cytoplasm. In terms of biological role, superoxide dismutase-like protein with no enzymatic activity. This is Cu-Zn superoxide dismutase-like protein OPG175 (OPG175) from Homo sapiens (Human).